Here is a 473-residue protein sequence, read N- to C-terminus: MEGLLLLLPTAIIALYLYISLIRRSRKKHNLPPGSDGWPFLGETFSYLKPHSAISIGRFMEDHISRYGKIYRSNLFGEPTIVSADAELNRFVLQNEGRLFECSYPRSIGGILGKWSMLVLVGDMHRDMRMISLNFMSAARLRTRLMPEVERQTLLVLRSWREGSTFSAQEEAKKFTFNLMAKHIMSMDPGEPETEMLRREYITFMKGVVSAPLNFPGTPYWKALKSRSSILAVIERKMEERIGRRDRGDGGVEDDDLLGWAMNQSNLLKEQILDLLLSLLFAGHETSSMALALAIYFLESCPEAVRDLRDEHLAISMSGKEGECGLSWDQYKQMEFTHCVINESLRLGNVVRFVHRKAIQDVQYKGYDIPCGWKVLPVFAAVHLDSTLYSDPHRFNPWRWQSSSSKTTAANFMPYGGGLRLCTGSELAKLEMAVFLHHLVLNYQWKLAEPEQAFAYPFLDFPKGLQIKVRAIT.

Residues 2–22 (EGLLLLLPTAIIALYLYISLI) form a helical membrane-spanning segment. Cys422 provides a ligand contact to heme.

This sequence belongs to the cytochrome P450 family. In terms of tissue distribution, mainly expressed in leaves and roots and, at low levels, in fruits and stems.

It is found in the membrane. The catalysed reaction is cholesterol + reduced [NADPH--hemoprotein reductase] + O2 = (22S)-22-hydroxycholesterol + oxidized [NADPH--hemoprotein reductase] + H2O + H(+). Its pathway is steroid metabolism; cholesterol metabolism. Canonical brassinosteroid (BR)-biosynthetic enzyme capable of converting cholesterol to 22S-hydroxycholesterol via sterol-C22 hydroxylation. This is Cholesterol 22-monohydroxylase CYP90B52 from Paris polyphylla (Daiswa polyphylla).